Here is a 252-residue protein sequence, read N- to C-terminus: NAC domain-containing protein 83 (252 aa).

In terms of domain architecture, NAC spans 14 to 160 (LPPGFRFHPT…NWVLCRIFLK (147 aa)). Residues 110-166 (VGLKKTLVFYKGKPPHGSRTDWIMHEYRLSSSPPSSMGPTQNWVLCRIFLKKRAGNK) mediate DNA binding. Disordered stretches follow at residues 165–194 (NKND…IITT) and 217–252 (LNLL…NSFR). Composition is skewed to low complexity over residues 180-194 (NNNN…IITT) and 219-252 (LLPS…NSFR). The tract at residues 213 to 226 (RTTDLNLLPSSPSS) is PEST-like.

Interacts with NAC007/VND4, NAC026/VND5 and NAC030/VND7. Interacts with the mungbean yellow mosaic virus (MYMV) AC1 replication-associated protein. In terms of tissue distribution, expressed in xylem and phloem cells in roots and inflorescence stems. Highly expressed in senescent leaves. Expressed in roots, and abscission and dehiscence tissues, such as axils of bracts and abscission zones in cauline leaves and siliques.

It is found in the nucleus. Functionally, transcriptional repressor that negatively regulates the expression of genes involved in xylem vessel formation. Represses the transcriptional activation activity of NAC030/VND7, which regulates protoxylem vessel differentiation by promoting immature xylem vessel-specific genes expression. Transcriptional activator that regulates the COLD-REGULATED (COR15A and COR15B) and RESPONSIVE TO DEHYDRATION (LTI78/RD29A and LTI65/RD29B) genes by binding directly to their promoters. Mediates signaling crosstalk between salt stress response and leaf aging process. May play a role in DNA replication of mungbean yellow mosaic virus. This chain is NAC domain-containing protein 83, found in Arabidopsis thaliana (Mouse-ear cress).